Here is a 99-residue protein sequence, read N- to C-terminus: CTP synthase (99 aa).

One can recognise a Glutamine amidotransferase type-1 domain in the interval Thr1 to Lys99. Position 28 (Arg28) interacts with L-glutamine. Active-site residues include His73 and Glu75.

The protein belongs to the CTP synthase family. Homotetramer.

It catalyses the reaction UTP + L-glutamine + ATP + H2O = CTP + L-glutamate + ADP + phosphate + 2 H(+). The catalysed reaction is L-glutamine + H2O = L-glutamate + NH4(+). The enzyme catalyses UTP + NH4(+) + ATP = CTP + ADP + phosphate + 2 H(+). Its pathway is pyrimidine metabolism; CTP biosynthesis via de novo pathway; CTP from UDP: step 2/2. With respect to regulation, allosterically activated by GTP, when glutamine is the substrate; GTP has no effect on the reaction when ammonia is the substrate. The allosteric effector GTP functions by stabilizing the protein conformation that binds the tetrahedral intermediate(s) formed during glutamine hydrolysis. Inhibited by the product CTP, via allosteric rather than competitive inhibition. In terms of biological role, catalyzes the ATP-dependent amination of UTP to CTP with either L-glutamine or ammonia as the source of nitrogen. Regulates intracellular CTP levels through interactions with the four ribonucleotide triphosphates. The sequence is that of CTP synthase from Mycoplasma capricolum subsp. capripneumoniae.